The following is a 169-amino-acid chain: Probable NADH dehydrogenase [ubiquinone] 1 alpha subcomplex subunit 5, mitochondrial (169 aa).

Residues 1-11 constitute a mitochondrion transit peptide; sequence MFLRAIGRPLL.

The protein belongs to the complex I NDUFA5 subunit family. In terms of assembly, complex I is composed of at least 49 different subunits.

It is found in the mitochondrion inner membrane. Its function is as follows. Accessory subunit of the mitochondrial membrane respiratory chain NADH dehydrogenase (Complex I), that is believed not to be involved in catalysis. Complex I functions in the transfer of electrons from NADH to the respiratory chain. The immediate electron acceptor for the enzyme is believed to be ubiquinone. The chain is Probable NADH dehydrogenase [ubiquinone] 1 alpha subcomplex subunit 5, mitochondrial from Arabidopsis thaliana (Mouse-ear cress).